The following is a 226-amino-acid chain: ATP-dependent dethiobiotin synthetase BioD (226 aa).

13–18 serves as a coordination point for ATP; sequence DVGKTL. Residue Thr17 coordinates Mg(2+). The active site involves Lys38. ATP is bound by residues Asp55, 117 to 120, 177 to 178, 206 to 208, and Glu213; these read EGAG, NR, and PFV. Mg(2+) contacts are provided by Asp55 and Glu117.

Belongs to the dethiobiotin synthetase family. As to quaternary structure, homodimer. Mg(2+) is required as a cofactor.

It localises to the cytoplasm. It catalyses the reaction (7R,8S)-7,8-diammoniononanoate + CO2 + ATP = (4R,5S)-dethiobiotin + ADP + phosphate + 3 H(+). Its pathway is cofactor biosynthesis; biotin biosynthesis; biotin from 7,8-diaminononanoate: step 1/2. Its function is as follows. Catalyzes a mechanistically unusual reaction, the ATP-dependent insertion of CO2 between the N7 and N8 nitrogen atoms of 7,8-diaminopelargonic acid (DAPA, also called 7,8-diammoniononanoate) to form a ureido ring. This chain is ATP-dependent dethiobiotin synthetase BioD, found in Aeromonas salmonicida (strain A449).